The following is a 278-amino-acid chain: Chitosanase (278 aa).

The signal sequence occupies residues 1–40 (MHSQHRTARIALAVVLTAIPASLATAGVGYASTQASTAVK). Glu-62 functions as the Proton donor in the catalytic mechanism. Asp-80 (nucleophile) is an active-site residue.

The protein belongs to the glycosyl hydrolase 46 family.

The protein localises to the secreted. The catalysed reaction is Endohydrolysis of beta-(1-&gt;4)-linkages between D-glucosamine residues in a partly acetylated chitosan.. Its function is as follows. Aids in the defense against invading fungal pathogens by degrading their cell wall chitosan. This Streptomyces sp. (strain N174) protein is Chitosanase (csn).